The primary structure comprises 525 residues: UPF0288 protein MA_3997 (525 aa).

This sequence belongs to the UPF0288 family.

The sequence is that of UPF0288 protein MA_3997 from Methanosarcina acetivorans (strain ATCC 35395 / DSM 2834 / JCM 12185 / C2A).